A 409-amino-acid chain; its full sequence is Glycinol 4-dimethylallyltransferase (409 aa).

A chloroplast-targeting transit peptide spans 1–44 (MDWGLAISSHPKPYSVTTGGNLWRSKHTTKNIYFASSWISKASR). Transmembrane regions (helical) follow at residues 113-133 (LSAFYWFSYPYTMIGITLCAF), 148-168 (LSFLIGVLQGVLPQLFIEIYL), 200-220 (VIISAAFLALSFGFTWITGSW), 222-242 (LICNLVVIASSWTAYSIDVPL), 249-269 (PFVAAMCMISTWALALPISYF), 287-307 (LGFLVAFMTFYSLGLALSKDI), 330-350 (AFWICVSFFEMAFGVGILAGA), 354-374 (HFWTKIFTGMGNAVLASILWY), and 388-408 (GSFYMFIWKLLYAGFFLMALI).

This sequence belongs to the UbiA prenyltransferase family. Mg(2+) is required as a cofactor. Mn(2+) serves as cofactor. The cofactor is Co(2+).

The protein resides in the plastid. It is found in the chloroplast membrane. The catalysed reaction is (6aS,11aS)-3,6a,9-trihydroxypterocarpan + dimethylallyl diphosphate = (6aS,11aS)-2-dimethylallyl-3,6a,9-trihydroxypterocarpan + diphosphate. The enzyme catalyses (6aS,11aS)-3,6a,9-trihydroxypterocarpan + dimethylallyl diphosphate = (6aS,11aS)-4-dimethylallyl-3,6a,9-trihydroxypterocarpan + diphosphate. It functions in the pathway phytoalexin biosynthesis; pterocarpan phytoalexin biosynthesis. Functionally, proposed to be involved in the biosynthesis of pterocarpan phytoalexins, specifically glyceollins. Can act as a prenyltransferase towards glycinol which is the direct precursor of glyceollins. Seems to be specific for prenylation at C-4 thus producing glyceollin I. The sequence is that of Glycinol 4-dimethylallyltransferase (G4DT) from Glycine max (Soybean).